The primary structure comprises 506 residues: Lysine--tRNA ligase (506 aa).

The Mg(2+) site is built by Glu-416 and Glu-423.

The protein belongs to the class-II aminoacyl-tRNA synthetase family. As to quaternary structure, homodimer. Mg(2+) is required as a cofactor.

It is found in the cytoplasm. It carries out the reaction tRNA(Lys) + L-lysine + ATP = L-lysyl-tRNA(Lys) + AMP + diphosphate. The chain is Lysine--tRNA ligase from Baumannia cicadellinicola subsp. Homalodisca coagulata.